The following is a 343-amino-acid chain: Probable transcription factor MYB58 (343 aa).

A disordered region spans residues methionine 1–arginine 30. Positions arginine 15–glutamate 27 are enriched in gly residues. HTH myb-type domains are found at residues glycine 26–leucine 78 and arginine 79–alanine 134. DNA-binding regions (H-T-H motif) lie at residues tryptophan 54 to lysine 77 and tryptophan 107 to glutamine 130. 3 disordered regions span residues leucine 137–phenylalanine 169, proline 219–leucine 238, and aspartate 307–leucine 343. Polar residues predominate over residues proline 157–phenylalanine 169. A compositionally biased stretch (pro residues) spans glutamine 320–serine 336.

It is found in the nucleus. Its function is as follows. Probable transcription factor. The chain is Probable transcription factor MYB58 from Oryza sativa subsp. japonica (Rice).